Here is a 347-residue protein sequence, read N- to C-terminus: MRWKRMMQLLDVHCEGEIGKVAIGGVPKIPGDTVADQLHWLNTDPKGRELRHFLVLEPRGAPIGSVNLLLPAKDSRADAAFIILQPDQAHASSGSNSICVTTALLESGMIEMQEPETVVMLETAAGLVKAVAQCRDGHCDSVTLTMVPSFVHELDAQIATESWGEIRFDLAYGGVFYALVDVRQLGLTIEPGNARRLVEAGMLLKGEINQRIQVVHPDIPAISGVAYVMFRDEDPDGAVRTCTTMWPGRVDRSPCGTGNSANLATLHARGRVKPGDSFLSRSIIGSQFTVGLQGLTTVAGRSAVIPTITGRGFTYGIHQVALDAFDPLGGGFVLTDVWGAAAETIKI.

Glutamine 85 contributes to the substrate binding site. Serine 93 functions as the Proton acceptor in the catalytic mechanism. Substrate is bound by residues 94–95 (GS) and aspartate 251. Cysteine 255 serves as the catalytic Proton donor. Substrate is bound at residue 256–257 (GT).

The protein belongs to the proline racemase family.

It catalyses the reaction trans-4-hydroxy-L-proline = cis-4-hydroxy-D-proline. Functionally, catalyzes the epimerization of trans-4-hydroxy-L-proline (t4LHyp) to cis-4-hydroxy-D-proline (c4DHyp). May be involved in a degradation pathway of t4LHyp. Can also catalyze the epimerization of trans-3-hydroxy-L-proline (t3LHyp) to cis-3-hydroxy-D-proline (c3DHyp) in vitro. Displays no proline racemase activity. This chain is 4-hydroxyproline 2-epimerase, found in Allorhizobium ampelinum (strain ATCC BAA-846 / DSM 112012 / S4) (Agrobacterium vitis (strain S4)).